The sequence spans 75 residues: Stewaprin-a (75 aa).

Residues 1 to 24 (MSSGGLLLLLGLLTLWAELIPVSG) form the signal peptide. A WAP domain is found at 27–72 (HPKKPGLCPPRPQKPPCVRECKNDWSCPGEQKCCRYGCIFECRDPI). Intrachain disulfides connect cysteine 34–cysteine 60, cysteine 43–cysteine 64, cysteine 47–cysteine 59, and cysteine 53–cysteine 68.

The protein belongs to the venom waprin family. Expressed by the venom gland.

It localises to the secreted. Its function is as follows. Damages membranes of susceptible bacteria. Has no hemolytic activity. Not toxic to mice. Does not inhibit the proteinases elastase and cathepsin G. The polypeptide is Stewaprin-a (Hoplocephalus stephensii (Stephens's banded snake)).